A 92-amino-acid polypeptide reads, in one-letter code: Small ribosomal subunit protein uS19 (92 aa).

It belongs to the universal ribosomal protein uS19 family.

In terms of biological role, protein S19 forms a complex with S13 that binds strongly to the 16S ribosomal RNA. This Borrelia recurrentis (strain A1) protein is Small ribosomal subunit protein uS19.